The primary structure comprises 227 residues: MAMSFFDQFASPSYLGIPLIAIAIALPWVLFPLPSLRWVNNRLITIQGWLINRFTNQLMLPLNTGGHKWALLLASLMVFLITINMLGLLPYTFTPTTQLSLNMGLAIPLWLATVIIGLRNQPTVALGDLLPEGTPLPLIPVLIIIETISLFIRPLALGVRLTANLTAGHLLIQLIATAVFVLLPMMPTVAILTATVLFLLTLLEVAVAMIQAYVFVLLLSLYLQENV.

The next 6 helical transmembrane spans lie at 14–34 (YLGIPLIAIAIALPWVLFPLP), 69–89 (WALLLASLMVFLITINMLGLL), 98–118 (QLSLNMGLAIPLWLATVIIGL), 132–152 (EGTPLPLIPVLIIIETISLFI), 179–199 (VFVLLPMMPTVAILTATVLFL), and 202–222 (LLEVAVAMIQAYVFVLLLSLY).

It belongs to the ATPase A chain family. As to quaternary structure, component of the ATP synthase complex composed at least of ATP5F1A/subunit alpha, ATP5F1B/subunit beta, ATP5MC1/subunit c (homooctomer), MT-ATP6/subunit a, MT-ATP8/subunit 8, ATP5ME/subunit e, ATP5MF/subunit f, ATP5MG/subunit g, ATP5MK/subunit k, ATP5MJ/subunit j, ATP5F1C/subunit gamma, ATP5F1D/subunit delta, ATP5F1E/subunit epsilon, ATP5PF/subunit F6, ATP5PB/subunit b, ATP5PD/subunit d, ATP5PO/subunit OSCP. ATP synthase complex consists of a soluble F(1) head domain (subunits alpha(3) and beta(3)) - the catalytic core - and a membrane F(0) domain - the membrane proton channel (subunits c, a, 8, e, f, g, k and j). These two domains are linked by a central stalk (subunits gamma, delta, and epsilon) rotating inside the F1 region and a stationary peripheral stalk (subunits F6, b, d, and OSCP). Interacts with DNAJC30; interaction is direct.

Its subcellular location is the mitochondrion inner membrane. It carries out the reaction H(+)(in) = H(+)(out). Its function is as follows. Subunit a, of the mitochondrial membrane ATP synthase complex (F(1)F(0) ATP synthase or Complex V) that produces ATP from ADP in the presence of a proton gradient across the membrane which is generated by electron transport complexes of the respiratory chain. ATP synthase complex consist of a soluble F(1) head domain - the catalytic core - and a membrane F(1) domain - the membrane proton channel. These two domains are linked by a central stalk rotating inside the F(1) region and a stationary peripheral stalk. During catalysis, ATP synthesis in the catalytic domain of F(1) is coupled via a rotary mechanism of the central stalk subunits to proton translocation. With the subunit c (ATP5MC1), forms the proton-conducting channel in the F(0) domain, that contains two crucial half-channels (inlet and outlet) that facilitate proton movement from the mitochondrial intermembrane space (IMS) into the matrix. Protons are taken up via the inlet half-channel and released through the outlet half-channel, following a Grotthuss mechanism. In Formosania lacustris (Oriental stream loach), this protein is ATP synthase F(0) complex subunit a.